A 2505-amino-acid chain; its full sequence is Fatty acid synthase (2505 aa).

An N-acetylmethionine modification is found at Met1. The Ketosynthase family 3 (KS3) domain maps to 1 to 406 (MEEVVIAGMS…GANVHVILQP (406 aa)). Position 59 is an N6-acetyllysine (Lys59). Phosphoserine is present on Ser63. Position 70 is an N6-acetyllysine (Lys70). Residue Cys161 is the For beta-ketoacyl synthase activity of the active site. At Ser207 the chain carries Phosphoserine. The For beta-ketoacyl synthase activity role is filled by His293. The residue at position 298 (Lys298) is an N6-acetyllysine. The active-site For beta-ketoacyl synthase activity is His331. The tract at residues 429 to 817 (RTMEAVQGLL…IDINPNALFP (389 aa)) is acyl and malonyl transferases. N6-acetyllysine is present on Lys528. The active-site For malonyltransferase activity is the Ser581. Residues 647-648 (DT) and Phe671 contribute to the an acyl-CoA site. Position 673 is an N6-acetyllysine (Lys673). Phosphoserine is present on Ser725. Arg773 provides a ligand contact to an acyl-CoA. Position 790 is an N6-acetyllysine (Lys790). The interval 844 to 966 (IPVAEDFPNG…KVYQWEDPDS (123 aa)) is N-terminal hotdog fold. Residues 844–1112 (IPVAEDFPNG…TSRRQQEQLV (269 aa)) enclose the PKS/mFAS DH domain. His878 functions as the Proton acceptor; for dehydratase activity in the catalytic mechanism. The interval 983 to 1112 (VSRLTQGEVY…TSRRQQEQLV (130 aa)) is C-terminal hotdog fold. At Lys993 the chain carries N6-acetyllysine. Asp1032 serves as the catalytic Proton donor; for dehydratase activity. Lys1276 is modified (N6-acetyllysine). Position 1464 is an S-nitrosocysteine (Cys1464). 2 positions are modified to phosphoserine: Ser1578 and Ser1588. The interval 1629-1857 (DVPSSWTLEE…VQVREEEPEA (229 aa)) is enoyl reductase. 1665 to 1682 (VLIHSGSGGVGQAAISIA) provides a ligand contact to NADP(+). Lys1698 bears the N6-(pyridoxal phosphate)lysine; alternate mark. At Lys1698 the chain carries N6-acetyllysine; alternate. Residues Lys1765, Lys1841, and Lys1989 each carry the N6-acetyllysine modification. Residue 1765 to 1780 (KFDLSNNHPLGMAIFL) coordinates NADP(+). Residues 1858–2113 (MLPGAQPTLI…VLAEKKAVAH (256 aa)) form a beta-ketoacyl reductase region. An S-nitrosocysteine modification is found at Cys2085. In terms of domain architecture, Carrier spans 2113 to 2193 (HGDGEAQRDL…EMSSKAGSDT (81 aa)). An O-(pantetheine 4'-phosphoryl)serine; alternate modification is found at Ser2151. Position 2151 is a phosphoserine; alternate (Ser2151). A phosphoserine mark is found at Ser2191 and Ser2230. Residues 2202-2505 (NDTSLKQAQL…AEPRVSVREG (304 aa)) are thioesterase. The For thioesterase activity role is filled by Ser2302. Lys2385 bears the N6-acetyllysine mark. Lys2443 is covalently cross-linked (Glycyl lysine isopeptide (Lys-Gly) (interchain with G-Cter in SUMO2)). His2475 serves as the catalytic For thioesterase activity.

Homodimer which is arranged in a head to tail fashion. Interacts with CEACAM1; this interaction is insulin and phosphorylation-dependent; reduces fatty-acid synthase activity. S-nitrosylation of Fatty acid synthase at cysteine residues Cys-1464 or Cys-2085 is important for the enzyme dimerization. In adipocytes, S-nitrosylation of Fatty acid synthase occurs under physiological conditions and gradually increases during adipogenesis.

The protein resides in the cytoplasm. Its subcellular location is the melanosome. It catalyses the reaction acetyl-CoA + n malonyl-CoA + 2n NADPH + 2n H(+) = a long-chain fatty acid + (n+1) CoA + n CO2 + 2n NADP(+).. The enzyme catalyses holo-[ACP] + acetyl-CoA = acetyl-[ACP] + CoA. It carries out the reaction holo-[ACP] + malonyl-CoA = malonyl-[ACP] + CoA. The catalysed reaction is a fatty acyl-[ACP] + malonyl-[ACP] + H(+) = a 3-oxoacyl-[ACP] + holo-[ACP] + CO2. It catalyses the reaction a (3R)-hydroxyacyl-[ACP] + NADP(+) = a 3-oxoacyl-[ACP] + NADPH + H(+). The enzyme catalyses a (3R)-hydroxyacyl-[ACP] = a (2E)-enoyl-[ACP] + H2O. It carries out the reaction a 2,3-saturated acyl-[ACP] + NADP(+) = a (2E)-enoyl-[ACP] + NADPH + H(+). The catalysed reaction is hexadecanoyl-[ACP] + H2O = hexadecanoate + holo-[ACP] + H(+). It catalyses the reaction acetyl-[ACP] + malonyl-[ACP] + H(+) = 3-oxobutanoyl-[ACP] + holo-[ACP] + CO2. The enzyme catalyses 3-oxobutanoyl-[ACP] + NADPH + H(+) = (3R)-hydroxybutanoyl-[ACP] + NADP(+). It carries out the reaction (3R)-hydroxybutanoyl-[ACP] = (2E)-butenoyl-[ACP] + H2O. The catalysed reaction is (2E)-butenoyl-[ACP] + NADPH + H(+) = butanoyl-[ACP] + NADP(+). It catalyses the reaction butanoyl-[ACP] + malonyl-[ACP] + H(+) = 3-oxohexanoyl-[ACP] + holo-[ACP] + CO2. The enzyme catalyses 3-oxohexanoyl-[ACP] + NADPH + H(+) = (3R)-hydroxyhexanoyl-[ACP] + NADP(+). It carries out the reaction (3R)-hydroxyhexanoyl-[ACP] = (2E)-hexenoyl-[ACP] + H2O. The catalysed reaction is (2E)-hexenoyl-[ACP] + NADPH + H(+) = hexanoyl-[ACP] + NADP(+). It catalyses the reaction hexanoyl-[ACP] + malonyl-[ACP] + H(+) = 3-oxooctanoyl-[ACP] + holo-[ACP] + CO2. The enzyme catalyses 3-oxooctanoyl-[ACP] + NADPH + H(+) = (3R)-hydroxyoctanoyl-[ACP] + NADP(+). It carries out the reaction (3R)-hydroxyoctanoyl-[ACP] = (2E)-octenoyl-[ACP] + H2O. The catalysed reaction is (2E)-octenoyl-[ACP] + NADPH + H(+) = octanoyl-[ACP] + NADP(+). It catalyses the reaction octanoyl-[ACP] + malonyl-[ACP] + H(+) = 3-oxodecanoyl-[ACP] + holo-[ACP] + CO2. The enzyme catalyses 3-oxodecanoyl-[ACP] + NADPH + H(+) = (3R)-hydroxydecanoyl-[ACP] + NADP(+). It carries out the reaction (3R)-hydroxydecanoyl-[ACP] = (2E)-decenoyl-[ACP] + H2O. The catalysed reaction is (2E)-decenoyl-[ACP] + NADPH + H(+) = decanoyl-[ACP] + NADP(+). It catalyses the reaction decanoyl-[ACP] + malonyl-[ACP] + H(+) = 3-oxododecanoyl-[ACP] + holo-[ACP] + CO2. The enzyme catalyses 3-oxododecanoyl-[ACP] + NADPH + H(+) = (3R)-hydroxydodecanoyl-[ACP] + NADP(+). It carries out the reaction (3R)-hydroxydodecanoyl-[ACP] = (2E)-dodecenoyl-[ACP] + H2O. The catalysed reaction is (2E)-dodecenoyl-[ACP] + NADPH + H(+) = dodecanoyl-[ACP] + NADP(+). It catalyses the reaction dodecanoyl-[ACP] + malonyl-[ACP] + H(+) = 3-oxotetradecanoyl-[ACP] + holo-[ACP] + CO2. The enzyme catalyses 3-oxotetradecanoyl-[ACP] + NADPH + H(+) = (3R)-hydroxytetradecanoyl-[ACP] + NADP(+). It carries out the reaction (3R)-hydroxytetradecanoyl-[ACP] = (2E)-tetradecenoyl-[ACP] + H2O. The catalysed reaction is (2E)-tetradecenoyl-[ACP] + NADPH + H(+) = tetradecanoyl-[ACP] + NADP(+). It catalyses the reaction tetradecanoyl-[ACP] + malonyl-[ACP] + H(+) = 3-oxohexadecanoyl-[ACP] + holo-[ACP] + CO2. The enzyme catalyses 3-oxohexadecanoyl-[ACP] + NADPH + H(+) = (3R)-hydroxyhexadecanoyl-[ACP] + NADP(+). It carries out the reaction (3R)-hydroxyhexadecanoyl-[ACP] = (2E)-hexadecenoyl-[ACP] + H2O. The catalysed reaction is (2E)-hexadecenoyl-[ACP] + NADPH + H(+) = hexadecanoyl-[ACP] + NADP(+). It catalyses the reaction hexadecanoyl-[ACP] + malonyl-[ACP] + H(+) = 3-oxooctadecanoyl-[ACP] + holo-[ACP] + CO2. The enzyme catalyses 3-oxooctadecanoyl-[ACP] + NADPH + H(+) = (3R)-hydroxyoctadecanoyl-[ACP] + NADP(+). It carries out the reaction (3R)-hydroxyoctadecanoyl-[ACP] = (2E)-octadecenoyl-[ACP] + H2O. The catalysed reaction is (2E)-octadecenoyl-[ACP] + NADPH + H(+) = octadecanoyl-[ACP] + NADP(+). It catalyses the reaction tetradecanoyl-[ACP] + H2O = tetradecanoate + holo-[ACP] + H(+). The enzyme catalyses octadecanoyl-[ACP] + H2O = octadecanoate + holo-[ACP] + H(+). The protein operates within lipid metabolism; fatty acid biosynthesis. Its activity is regulated as follows. Cerulenin, a potent non-competitive pharmacological inhibitor of FAS, binds covalently to the active site of the condensing enzyme region, inactivating a key enzyme step in fatty acid synthesis. Another inhibitor, though less efficient, is C75, a member of the alpha-methylene-gamma-butyrolactone chemical class, also proposed as an antitumour and anti-obesity agent. Fatty acid synthetase is a multifunctional enzyme that catalyzes the de novo biosynthesis of long-chain saturated fatty acids starting from acetyl-CoA and malonyl-CoA in the presence of NADPH. This multifunctional protein contains 7 catalytic activities and a site for the binding of the prosthetic group 4'-phosphopantetheine of the acyl carrier protein ([ACP]) domain. This is Fatty acid synthase (Fasn) from Rattus norvegicus (Rat).